A 367-amino-acid chain; its full sequence is UDP-N-acetylglucosamine--N-acetylmuramyl-(pentapeptide) pyrophosphoryl-undecaprenol N-acetylglucosamine transferase (367 aa).

Residues 15–17 (TGG), asparagine 127, arginine 163, serine 191, isoleucine 249, and glutamine 294 each bind UDP-N-acetyl-alpha-D-glucosamine.

It belongs to the glycosyltransferase 28 family. MurG subfamily.

It is found in the cell inner membrane. It carries out the reaction di-trans,octa-cis-undecaprenyl diphospho-N-acetyl-alpha-D-muramoyl-L-alanyl-D-glutamyl-meso-2,6-diaminopimeloyl-D-alanyl-D-alanine + UDP-N-acetyl-alpha-D-glucosamine = di-trans,octa-cis-undecaprenyl diphospho-[N-acetyl-alpha-D-glucosaminyl-(1-&gt;4)]-N-acetyl-alpha-D-muramoyl-L-alanyl-D-glutamyl-meso-2,6-diaminopimeloyl-D-alanyl-D-alanine + UDP + H(+). The protein operates within cell wall biogenesis; peptidoglycan biosynthesis. Functionally, cell wall formation. Catalyzes the transfer of a GlcNAc subunit on undecaprenyl-pyrophosphoryl-MurNAc-pentapeptide (lipid intermediate I) to form undecaprenyl-pyrophosphoryl-MurNAc-(pentapeptide)GlcNAc (lipid intermediate II). The chain is UDP-N-acetylglucosamine--N-acetylmuramyl-(pentapeptide) pyrophosphoryl-undecaprenol N-acetylglucosamine transferase from Burkholderia thailandensis (strain ATCC 700388 / DSM 13276 / CCUG 48851 / CIP 106301 / E264).